Consider the following 192-residue polypeptide: UPF0312 protein plu2095 (192 aa).

Positions 1-23 (MLKKTLLGLTAGALLLNASSALA) are cleaved as a signal peptide.

Belongs to the UPF0312 family. Type 1 subfamily.

The protein localises to the periplasm. In Photorhabdus laumondii subsp. laumondii (strain DSM 15139 / CIP 105565 / TT01) (Photorhabdus luminescens subsp. laumondii), this protein is UPF0312 protein plu2095.